Consider the following 260-residue polypeptide: MNENRLAIDILLLCISCGASALAGFSPTASSSLPATNLTDIGFAPPKYLTEAANIPKTRRKRYISQNDMLAILDYHNKVRGKVFPPASNMEYMVWDDTLAKTAEQWASTCIWEHGPRNLLRFLGQNLSVRTGRYRSILQLVKPWHDEVKDYSFPYPRDCNPRCPLKCYGPMCTHYTQMVWATSNKVGCAINTCHNMNVWGSVWKRATYLVCNYSPKGNWIGEAPYKVGVPCSMCPPSYGGSCSNNMCFPAVNSNYLHWFK.

The N-terminal stretch at 1-21 (MNENRLAIDILLLCISCGASA) is a signal peptide. Residues 22–62 (LAGFSPTASSSLPATNLTDIGFAPPKYLTEAANIPKTRRKR) constitute a propeptide that is removed on maturation. Asn-37 and Asn-126 each carry an N-linked (GlcNAc...) asparagine glycan. The SCP domain occupies 73-213 (LDYHNKVRGK…KRATYLVCNY (141 aa)).

The protein belongs to the CRISP family.

The protein localises to the secreted. In terms of biological role, serine protease inhibitor which displays weak inhibitory activity against trypsin. May play a role in facial patterning during embryonic development. In Danio rerio (Zebrafish), this protein is Peptidase inhibitor 15-A (pi15a).